Consider the following 62-residue polypeptide: Large ribosomal subunit protein bL28 (62 aa).

Belongs to the bacterial ribosomal protein bL28 family.

The protein is Large ribosomal subunit protein bL28 of Koribacter versatilis (strain Ellin345).